A 306-amino-acid polypeptide reads, in one-letter code: uncharacterized protein (306 aa).

It to M.tuberculosis Rv1486c, M.bovis Mb1522c and M.leprae ML1804.

This is an uncharacterized protein from Mycobacterium avium.